A 232-amino-acid polypeptide reads, in one-letter code: Ribose-5-phosphate isomerase A (232 aa).

Residues 31–34 (TGST), 88–91 (DGAD), and 101–104 (KGGG) contribute to the substrate site. E110 acts as the Proton acceptor in catalysis. K128 contributes to the substrate binding site.

This sequence belongs to the ribose 5-phosphate isomerase family. Homodimer.

The catalysed reaction is aldehydo-D-ribose 5-phosphate = D-ribulose 5-phosphate. Its pathway is carbohydrate degradation; pentose phosphate pathway; D-ribose 5-phosphate from D-ribulose 5-phosphate (non-oxidative stage): step 1/1. Catalyzes the reversible conversion of ribose-5-phosphate to ribulose 5-phosphate. The sequence is that of Ribose-5-phosphate isomerase A from Lactobacillus gasseri (strain ATCC 33323 / DSM 20243 / BCRC 14619 / CIP 102991 / JCM 1131 / KCTC 3163 / NCIMB 11718 / NCTC 13722 / AM63).